Consider the following 178-residue polypeptide: Cytochrome b6-f complex subunit 4 (178 aa).

3 helical membrane-spanning segments follow: residues 36 to 56 (LSYI…GLAV), 95 to 115 (LLGV…PFLE), and 131 to 151 (TVSL…ALPI).

Belongs to the cytochrome b family. PetD subfamily. In terms of assembly, the 4 large subunits of the cytochrome b6-f complex are cytochrome b6, subunit IV (17 kDa polypeptide, petD), cytochrome f and the Rieske protein, while the 4 small subunits are petG, petL, petM and petN. The complex functions as a dimer.

The protein localises to the plastid. It localises to the chloroplast thylakoid membrane. In terms of biological role, component of the cytochrome b6-f complex, which mediates electron transfer between photosystem II (PSII) and photosystem I (PSI), cyclic electron flow around PSI, and state transitions. This chain is Cytochrome b6-f complex subunit 4, found in Picea abies (Norway spruce).